Consider the following 624-residue polypeptide: ERAD-associated E3 ubiquitin-protein ligase ASI1 (624 aa).

Over 1 to 69 (MNSSTSSENV…SEEIPPTLRS (69 aa)) the chain is Perinuclear space. Asn-2, Asn-19, and Asn-29 each carry an N-linked (GlcNAc...) asparagine glycan. The chain crosses the membrane as a helical span at residues 70 to 90 (VFDTIGFFFSPYAIFCFVIAI). Topologically, residues 91 to 116 (VLNRFVVFYAVLNNGSRRTLPLWLSN) are nuclear. Residues 117-137 (VFHVSAVVVLAMVSLGPLTLG) form a helical membrane-spanning segment. Over 138–152 (KDFKILGDPAFAQEK) the chain is Perinuclear space. Residues 153–173 (FLLNIFYAFAYSYCVETIFTI) form a helical membrane-spanning segment. Residues 174–209 (MRNSSPLEGTDYSLFELSIQFYTMTNNNTKFLDSPD) are Nuclear-facing. Residues 210 to 230 (YIIDCSMAILSRILIHLVEIF) traverse the membrane as a helical segment. Residues 231-273 (RLRNYRLLFSTIMNLCHICYLGIRVKQGGWKSLPFSVKFRHFP) are Perinuclear space-facing. A helical transmembrane segment spans residues 274-294 (KLFSVSIICLSLLIFKLSCLI). The Nuclear portion of the chain corresponds to 295–624 (RWDPFGKSRN…CKVHPVSDSK (330 aa)). The segment at 467–490 (TSDDEYSEDYEPSEVESLGDSDEE) is disordered. Residues 468–490 (SDDEYSEDYEPSEVESLGDSDEE) are compositionally biased toward acidic residues. Residues 568 to 608 (CAVCKVNERNTVLWPCRCFAICEDCRISLGLRGFSTCVCCR) form an RING-type; atypical zinc finger.

As to quaternary structure, component of the Asi complex, which contains ASI1, ASI2 and ASI3. Interacts directly with ASI3. In terms of processing, glycosylation is not required for ASI1 function.

The protein resides in the nucleus inner membrane. It carries out the reaction S-ubiquitinyl-[E2 ubiquitin-conjugating enzyme]-L-cysteine + [acceptor protein]-L-lysine = [E2 ubiquitin-conjugating enzyme]-L-cysteine + N(6)-ubiquitinyl-[acceptor protein]-L-lysine.. E3 ubiquitin-protein ligase which transfers ubiquitin to substrates promoting their degradation. Part of the nuclear inner membrane (INM)-specific branch of the ER-associated degradation (ERAD) pathway, required for the elimination of misfolded proteins in the INM, a specialized ER subdomain. Required for ERG11 degradation. Negative regulator of SPS-sensor signaling. Together with ASI2 and ASI3, prevents the unprocessed precursor forms of STP1 and STP2 that escape cytoplasmic anchoring from inducing SPS-sensor-regulated genes in the absence of inducing signals. Controls amino acid permease (AAP) gene expression in response to amino acid availability, a process mediated by the transcription factors STP1 and STP1. In Saccharomyces cerevisiae (strain ATCC 204508 / S288c) (Baker's yeast), this protein is ERAD-associated E3 ubiquitin-protein ligase ASI1 (ASI1).